The chain runs to 100 residues: MAKKSMIAREVKRKKLVKKYATKRKSLLDEFNAAKDPMERLEIHRKIQGLPRNSAPTRVRNRCWATGKPRGVYRDFGLCRNQLRLRAHNGELPGVVKSSW.

It belongs to the universal ribosomal protein uS14 family. As to quaternary structure, part of the 30S ribosomal subunit. Contacts proteins S3 and S10.

Functionally, binds 16S rRNA, required for the assembly of 30S particles and may also be responsible for determining the conformation of the 16S rRNA at the A site. The sequence is that of Small ribosomal subunit protein uS14 from Prochlorococcus marinus subsp. pastoris (strain CCMP1986 / NIES-2087 / MED4).